The sequence spans 154 residues: MELSDQEWKHVLDIWTKVESKLPEHGHEVIIRLLQEHPETQERFEKFKHMKTADEMKSSEKMKQHGNTVFTALGNILKQKGNHAEVLKPLAKSHALEHKIPVKYLEFISEIIVKVIAEKYPADFGADSQAAMRKALELFRNDMASKYKEFGYQG.

The Globin domain maps to 2 to 148 (ELSDQEWKHV…FRNDMASKYK (147 aa)). Nitrite is bound at residue His65. His65 provides a ligand contact to O2. Heme b is bound at residue His94.

Belongs to the globin family. As to quaternary structure, monomeric.

The protein localises to the cytoplasm. It localises to the sarcoplasm. The catalysed reaction is Fe(III)-heme b-[protein] + nitric oxide + H2O = Fe(II)-heme b-[protein] + nitrite + 2 H(+). It carries out the reaction H2O2 + AH2 = A + 2 H2O. Monomeric heme protein which primary function is to store oxygen and facilitate its diffusion within muscle tissues. Reversibly binds oxygen through a pentacoordinated heme iron and enables its timely and efficient release as needed during periods of heightened demand. Depending on the oxidative conditions of tissues and cells, and in addition to its ability to bind oxygen, it also has a nitrite reductase activity whereby it regulates the production of bioactive nitric oxide. Under stress conditions, like hypoxia and anoxia, it also protects cells against reactive oxygen species thanks to its pseudoperoxidase activity. The protein is Myoglobin (MB) of Alligator mississippiensis (American alligator).